We begin with the raw amino-acid sequence, 330 residues long: Putative aminopeptidase (330 aa).

A divalent metal cation contacts are provided by His65 and Asp168. Residue Glu198 is the Proton acceptor of the active site. Positions 199, 221, and 307 each coordinate a divalent metal cation.

It belongs to the peptidase M42 family. Requires a divalent metal cation as cofactor.

This is Putative aminopeptidase (celM) from Acetivibrio thermocellus (Hungateiclostridium thermocellum).